The primary structure comprises 510 residues: MDIRAAEISAILKDQIKNFGQEAEVTEVGQVLSVGDGIARVYGLDNVQAGEMVEFENGTRGMALNLETDNVGIVIFGADREIKEGQTVKRTRAIVDTPVGKGLLGRVVDALGNPIDGKGPIQSTERKRVDVKAPGIIPRKSVNEPMATGLKAIDALIPVGRGQRELIIGDRQTGKTAIALDTILNQKPLNVEGAPEGQKLYCVYVAIGQKRSTVAQFVKVLEEQGALEYSIVVAATASDPAPMQYIAPFTGCTMGEYFRDNGMHAVIIYDDLSKQAVAYRQMSLLLRRPPGREAYPGDVFYLHSRLLERAAKLNEDHGSGSLTALPIIETQANDVSAYIPTNVISITDGQIFLETDLFFQGIRPAVNVGLSVSRVGSSAQTKAMKKVAGKIKGELAQYREMAAFAQFGSDLDASTQRLLNRGSRLTELLKQPQFSPLKMEEQVVVIYAGVNGYLDPLPVSKVRAFEDGLLSLLRGKNVEILNTIRDSRDLSNETAAQLKSVVEGYAKTFA.

169–176 (GDRQTGKT) is an ATP binding site.

Belongs to the ATPase alpha/beta chains family. As to quaternary structure, F-type ATPases have 2 components, CF(1) - the catalytic core - and CF(0) - the membrane proton channel. CF(1) has five subunits: alpha(3), beta(3), gamma(1), delta(1), epsilon(1). CF(0) has four main subunits: a(1), b(1), b'(1) and c(9-12).

It is found in the cell inner membrane. The catalysed reaction is ATP + H2O + 4 H(+)(in) = ADP + phosphate + 5 H(+)(out). Produces ATP from ADP in the presence of a proton gradient across the membrane. The alpha chain is a regulatory subunit. The protein is ATP synthase subunit alpha of Rhodopseudomonas palustris (strain BisB18).